The chain runs to 344 residues: Hypoxia-inducible factor 1-alpha inhibitor (344 aa).

Ala-2 carries the N-acetylalanine modification. The JmjC domain occupies 133–303; the sequence is GRVYLQQTLN…PKRIEYPLKA (171 aa). A 2-oxoglutarate-binding site is contributed by Tyr-136. Substrate is bound by residues Asp-143 and 173 to 174; that span reads LT. Residue Thr-187 coordinates 2-oxoglutarate. The Fe cation site is built by His-190 and Asp-192. 192 to 194 provides a ligand contact to substrate; the sequence is DEQ. 2 residues coordinate 2-oxoglutarate: Asn-196 and Lys-205. A substrate-binding site is contributed by 229-230; the sequence is RQ. His-270 serves as a coordination point for Fe cation. Position 285 (Asn-285) interacts with 2-oxoglutarate. Residues Ala-291 and Asn-312 each coordinate substrate.

Homodimer; homodimerization is essential for catalytic activity. It depends on Fe(2+) as a cofactor.

The protein localises to the nucleus. The protein resides in the cytoplasm. It localises to the perinuclear region. The catalysed reaction is L-asparaginyl-[hypoxia-inducible factor alpha subunit] + 2-oxoglutarate + O2 = (3S)-3-hydroxy-L-asparaginyl-[hypoxia-inducible factor alpha subunit] + succinate + CO2. The enzyme catalyses L-histidyl-[ankyrin-repeat domain protein] + 2-oxoglutarate + O2 = (3S)-3-hydroxy-L-histidyl-[ankyrin-repeat domain protein] + succinate + CO2. It catalyses the reaction L-asparaginyl-[ankyrin-repeat domain protein] + 2-oxoglutarate + O2 = (3S)-3-hydroxy-L-asparaginyl-[ankyrin-repeat domain protein] + succinate + CO2. It carries out the reaction L-aspartyl-[ankyrin-repeat domain protein] + 2-oxoglutarate + O2 = (3S)-3-hydroxy-L-aspartyl-[ankyrin-repeat domain protein] + succinate + CO2. Hydroxylates a specific Asn residue in the C-terminal transactivation domain (CAD) of HIF-1 alpha. The hydroxylation prevents interaction of HIF-1 with transcriptional coactivators. Also hydroxylates specific Asn, Asp and His residues within ankyrin repeat domain-containing proteins. The sequence is that of Hypoxia-inducible factor 1-alpha inhibitor (hif1an) from Danio rerio (Zebrafish).